The sequence spans 270 residues: Sec-independent protein translocase protein TatC (270 aa).

The next 6 helical transmembrane spans lie at 25 to 45 (FIAV…LFDI), 75 to 95 (VSLL…FWMF), 111 to 131 (VVIL…FIVF), 156 to 176 (LGFA…PLVL), 195 to 211 (KYAI…ITPP), and 213 to 233 (VVTQ…SIIG). A disordered region spans residues 243–270 (SDEEEAAENSDVQTDKSTDDTTPGEDQN).

Belongs to the TatC family. In terms of assembly, the Tat system comprises two distinct complexes: a TatABC complex, containing multiple copies of TatA, TatB and TatC subunits, and a separate TatA complex, containing only TatA subunits. Substrates initially bind to the TatABC complex, which probably triggers association of the separate TatA complex to form the active translocon.

The protein resides in the cell inner membrane. Its function is as follows. Part of the twin-arginine translocation (Tat) system that transports large folded proteins containing a characteristic twin-arginine motif in their signal peptide across membranes. Together with TatB, TatC is part of a receptor directly interacting with Tat signal peptides. The protein is Sec-independent protein translocase protein TatC of Desulforapulum autotrophicum (strain ATCC 43914 / DSM 3382 / VKM B-1955 / HRM2) (Desulfobacterium autotrophicum).